Reading from the N-terminus, the 107-residue chain is MKNLAGLMKQASQMQAKMEAAQSNLASLIVDGSAGAGLVTVKLTGKGEMRDLKIDPQLADPSDIETLQDLIVAAYTDAKTKAEAASSEAMRDVTGGLDLPAGLKLPF.

This sequence belongs to the YbaB/EbfC family. In terms of assembly, homodimer.

It is found in the cytoplasm. Its subcellular location is the nucleoid. Functionally, binds to DNA and alters its conformation. May be involved in regulation of gene expression, nucleoid organization and DNA protection. This is Nucleoid-associated protein GOX0603 from Gluconobacter oxydans (strain 621H) (Gluconobacter suboxydans).